A 260-amino-acid chain; its full sequence is Zinc finger protein 575 (260 aa).

The disordered stretch occupies residues 22-81 (PGLGPGRWLLPGAHQPSCPPAPHQGPLQKPSQSAPGPTASASAPPRPRRRPPPQRPHRCP). Positions 51–64 (PSQSAPGPTASASA) are enriched in low complexity. A compositionally biased stretch (basic residues) spans 67–78 (RPRRRPPPQRPH). 6 consecutive C2H2-type zinc fingers follow at residues 78–100 (HRCP…RLAH), 106–128 (HPCP…RLTH), 134–156 (HPCP…LWTH), 162–184 (YPCP…RHTH), 192–214 (YPCP…RLCH), and 228–255 (HRCS…QVEH).

This sequence belongs to the krueppel C2H2-type zinc-finger protein family.

The protein resides in the nucleus. Functionally, may be involved in transcriptional regulation. The chain is Zinc finger protein 575 (ZNF575) from Macaca fascicularis (Crab-eating macaque).